We begin with the raw amino-acid sequence, 328 residues long: Organic solute transporter alpha-like protein (328 aa).

Residues 1-44 are Extracellular-facing; sequence MNASENYFTMDPTENISQVLDQNRNNTNSLRTHPTVEEYYENMT. Residues Asn-2, Asn-15, Asn-25, and Asn-42 are each glycosylated (N-linked (GlcNAc...) asparagine). A helical membrane pass occupies residues 45-65; the sequence is AFLSLAIFIASLLTILNISIF. The Cytoplasmic portion of the chain corresponds to 66-84; the sequence is ATTVSRLRRHLDKPLLGPS. The helical transmembrane segment at 85–105 threads the bilayer; the sequence is IMMVGLYPIISVAALVTILVP. Tyr-106 is a topological domain (extracellular). A helical transmembrane segment spans residues 107-127; it reads SWFICHTVMHVMFMVGGPVFR. At 128–177 the chain is on the cytoplasmic side; the sequence is TLLFRYVGSEQNYVKETAGEAVQLNTPPCCCCCLCLPMVIPTKAKLCISR. A helical transmembrane segment spans residues 178-198; it reads YMVWQMPFWQGSIMLVMNILY. Over 199 to 208 the chain is Extracellular; that stretch reads YRDIQLYRQV. A helical membrane pass occupies residues 209–229; the sequence is MFFFIPFIVCSIVLGAWSLQI. Topologically, residues 230–247 are cytoplasmic; the sequence is TVRMITKVRGDYQLRKKM. The helical transmembrane segment at 248 to 265 threads the bilayer; sequence FCLQLVVMLCKLQYLVLY. At 266–287 the chain is on the extracellular side; it reads DQLDGIKMGGEYPINHTVYKQT. The N-linked (GlcNAc...) asparagine glycan is linked to Asn-280. The helical transmembrane segment at 288-308 threads the bilayer; it reads IINILILVEMVLVSMMVQSAY. Over 309–328 the chain is Cytoplasmic; it reads RTPVQVQIDEVNKEKEVTRI.

It belongs to the OST-alpha family.

The protein resides in the cell membrane. Functionally, probable transporter. This is Organic solute transporter alpha-like protein from Drosophila melanogaster (Fruit fly).